The following is a 388-amino-acid chain: Xylose isomerase (388 aa).

Catalysis depends on residues His54 and Asp57. Mg(2+) contacts are provided by Glu181, Glu217, His220, Asp245, Asp255, Asp257, and Asp287.

Belongs to the xylose isomerase family. Homotetramer. Requires Mg(2+) as cofactor.

The protein resides in the cytoplasm. The enzyme catalyses alpha-D-xylose = alpha-D-xylulofuranose. In terms of biological role, involved in D-xylose catabolism. The sequence is that of Xylose isomerase (xylA) from Streptomyces rubiginosus.